The chain runs to 184 residues: GTP cyclohydrolase 1 (184 aa).

Residues cysteine 75, histidine 78, and cysteine 146 each contribute to the Zn(2+) site.

The protein belongs to the GTP cyclohydrolase I family. As to quaternary structure, homomer.

The catalysed reaction is GTP + H2O = 7,8-dihydroneopterin 3'-triphosphate + formate + H(+). It participates in cofactor biosynthesis; 7,8-dihydroneopterin triphosphate biosynthesis; 7,8-dihydroneopterin triphosphate from GTP: step 1/1. The sequence is that of GTP cyclohydrolase 1 from Teredinibacter turnerae (strain ATCC 39867 / T7901).